The sequence spans 398 residues: Elongation factor Tu (398 aa).

Residues Lys10–Glu207 form the tr-type G domain. The interval Gly19–Thr26 is G1. Gly19–Thr26 serves as a coordination point for GTP. Thr26 provides a ligand contact to Mg(2+). The tract at residues Gly63–Asn67 is G2. A G3 region spans residues Asp84–Gly87. GTP-binding positions include Asp84–His88 and Asn139–Asp142. Residues Asn139–Asp142 are G4. Residues Ser177 to Leu179 form a G5 region.

The protein belongs to the TRAFAC class translation factor GTPase superfamily. Classic translation factor GTPase family. EF-Tu/EF-1A subfamily. As to quaternary structure, monomer.

It is found in the cytoplasm. The enzyme catalyses GTP + H2O = GDP + phosphate + H(+). Its function is as follows. GTP hydrolase that promotes the GTP-dependent binding of aminoacyl-tRNA to the A-site of ribosomes during protein biosynthesis. This Streptococcus pneumoniae serotype 4 (strain ATCC BAA-334 / TIGR4) protein is Elongation factor Tu.